An 81-amino-acid polypeptide reads, in one-letter code: Translational regulator CsrA (81 aa).

This sequence belongs to the CsrA/RsmA family. In terms of assembly, homodimer; the beta-strands of each monomer intercalate to form a hydrophobic core, while the alpha-helices form wings that extend away from the core.

It localises to the cytoplasm. A translational regulator that binds mRNA to regulate translation initiation and/or mRNA stability. Usually binds in the 5'-UTR at or near the Shine-Dalgarno sequence preventing ribosome-binding, thus repressing translation. Its main target seems to be the major flagellin gene, while its function is anatagonized by FliW. In Halothermothrix orenii (strain H 168 / OCM 544 / DSM 9562), this protein is Translational regulator CsrA.